A 218-amino-acid chain; its full sequence is Adenylate kinase (218 aa).

10–15 (GAGKGT) is a binding site for ATP. An NMP region spans residues 30–59 (STGDMLRAAVKAATPLGLAAKKIMDEGGLV). AMP contacts are provided by residues Thr31, Arg36, 57–59 (GLV), 85–88 (GFPR), and Gln92. Positions 122–159 (GRRVHLASGRTYHVTFNPPAVPDKDDLTGEPLVQRNDD) are LID. Residues Arg123 and 132–133 (TY) each bind ATP. Positions 156 and 167 each coordinate AMP. An ATP-binding site is contributed by Gly203.

It belongs to the adenylate kinase family. Monomer.

It localises to the cytoplasm. It carries out the reaction AMP + ATP = 2 ADP. Its pathway is purine metabolism; AMP biosynthesis via salvage pathway; AMP from ADP: step 1/1. In terms of biological role, catalyzes the reversible transfer of the terminal phosphate group between ATP and AMP. Plays an important role in cellular energy homeostasis and in adenine nucleotide metabolism. The protein is Adenylate kinase of Chlorobaculum tepidum (strain ATCC 49652 / DSM 12025 / NBRC 103806 / TLS) (Chlorobium tepidum).